The chain runs to 5084 residues: Apicidin F synthase (5084 aa).

Residues 209 to 606 (ARILQRQPDK…VGRLDSQVKL (398 aa)) form an adenylation 1 region. Residues 731–808 (HETDNCQRLL…EAASSMREVV (78 aa)) enclose the Carrier 1 domain. The residue at position 768 (Ser768) is an O-(pantetheine 4'-phosphoryl)serine. Condensation regions lie at residues 822–1124 (YPLS…FPIY) and 1309–1609 (EIYC…SILV). An adenylation 2 region spans residues 1788–2192 (EDPTREAVFS…IGRKDNQIKI (405 aa)). The region spanning 2341–2415 (VVKDDPVSEL…DMAKGMAPLS (75 aa)) is the Carrier 2 domain. O-(pantetheine 4'-phosphoryl)serine is present on Ser2376. The interval 2415 to 2441 (SLTAPESTSSSSPQSFSTSTSTTIIEN) is disordered. Low complexity predominate over residues 2421 to 2437 (STSSSSPQSFSTSTSTT). The condensation 3 stretch occupies residues 2478 to 2755 (EDIFPCTPMQ…IVTLPRQLNI (278 aa)). Positions 2935 to 3328 (RNNPRARAVV…GRRDGQIKLR (394 aa)) are adenylation 3. Positions 3463–3539 (ETWSSSEAIV…DMASRLSRPE (77 aa)) constitute a Carrier 3 domain. At Ser3500 the chain carries O-(pantetheine 4'-phosphoryl)serine. Residues 3581-3866 (EDIYPCTPLQ…IATVPSRTTI (286 aa)) are condensation 4. Residues 4029-4426 (RKQVELSPSH…TVSWIGRKDH (398 aa)) form an adenylation 4 region. The 78-residue stretch at 4554–4631 (ALKTPKERLL…DMADLLGPLR (78 aa)) folds into the Carrier 4 domain. O-(pantetheine 4'-phosphoryl)serine is present on Ser4592. Residues 4669 to 4948 (EQIYPCTAYQ…ISKLPLRIQL (280 aa)) are condensation 5.

It belongs to the NRP synthetase family.

It functions in the pathway secondary metabolite biosynthesis. Non-ribosomal peptide synthetase; part of the gene cluster that mediates the biosynthesis of the cyclic tetrapeptide apicidin F (APF). The non-ribosomal peptide synthetase apf1 incorporates four different amino acids to produce apicidin F: L-phenylalanine, D-pipecolic acid (D-pip), N-methoxy-L-tryptophan and L-2-aminooctanedioic acid. L-Phenylalanine is the only proteinogenic amino acid directly used by apf1. The 3 other apf1 substrates are non-proteinogenic and have to be modified by other enzymes of the cluster. Lysine is converted to delta-1-pyrroline-5-carboxylate (P5C) which is reduced to L-pipecolic acid (L-pip) by apf3. L-pip is epimerized to D-pip, probably by apf1 activity, prior to incorporation. L-Tryptophan is N-oxidyzed by one of the cytochrome P450 monooxygenases (apf7 or apf8), and further methylated at the hydroxy group by the O-methyltransferase apf6 to yield N-methoxy-L-tryptophan. The synthesis of the fourth apf1 substrate is more complex. The fatty acid synthase apf5 is involved in the synthesis of the octanoic acid backbone of L-2-aminooctanedioic acid by fixing one acetyl-CoA unit and three malonyl-CoA units. Then one of the cytochrome P450 monooxygenases (apf7 or apf8) may oxidize this backbone to 2-oxooctanoic acid. The aminotransferase apf4 is predicted to catalyze the exchange of the keto group with an amino group. The next step would be the oxidation of 2-aminooctanoic acid by one of the cytochrome P450 monooxygenases (apf7 or apf8). The last step is the oxidation of 2-amino-8-hydroxyoctanoic acid to 2-aminooctanedioic acid is catalyzed by the FAD-dependent monooxygenase apf9. In Gibberella fujikuroi (strain CBS 195.34 / IMI 58289 / NRRL A-6831) (Bakanae and foot rot disease fungus), this protein is Apicidin F synthase.